The chain runs to 223 residues: Neurotrophic factor BDNF precursor form (223 aa).

Positions 1–5 are cleaved as a signal peptide; the sequence is SCMKA. A propeptide spanning residues 6–114 is cleaved from the precursor; the sequence is APMKEVSIRG…AANMSMRVRR (109 aa). A glycan (N-linked (GlcNAc...) asparagine) is linked at Asn107. Cystine bridges form between Cys127/Cys194 and Cys172/Cys223.

This sequence belongs to the NGF-beta family.

It is found in the secreted. Promotes the survival of neuronal populations that are all located either in the central nervous system or directly connected to it. This chain is Neurotrophic factor BDNF precursor form (BDNF), found in Boa constrictor (Boa).